A 246-amino-acid polypeptide reads, in one-letter code: ATP synthase subunit a, chloroplastic (246 aa).

Helical transmembrane passes span 35–55 (AQVL…TFLA), 94–114 (IPFI…GALI), 132–152 (DINT…YAGL), 198–218 (LVVA…MMFL), and 219–239 (GLFT…AYIG).

It belongs to the ATPase A chain family. As to quaternary structure, F-type ATPases have 2 components, CF(1) - the catalytic core - and CF(0) - the membrane proton channel. CF(1) has five subunits: alpha(3), beta(3), gamma(1), delta(1), epsilon(1). CF(0) has four main subunits: a, b, b' and c.

The protein resides in the plastid. It is found in the chloroplast thylakoid membrane. Functionally, key component of the proton channel; it plays a direct role in the translocation of protons across the membrane. In Chara vulgaris (Common stonewort), this protein is ATP synthase subunit a, chloroplastic.